The sequence spans 387 residues: UDP-N-acetylglucosamine--N-acetylmuramyl-(pentapeptide) pyrophosphoryl-undecaprenol N-acetylglucosamine transferase (387 aa).

UDP-N-acetyl-alpha-D-glucosamine-binding positions include 26 to 28 (TGG), asparagine 137, arginine 177, serine 205, and glutamine 306.

It belongs to the glycosyltransferase 28 family. MurG subfamily.

The protein localises to the cell inner membrane. It carries out the reaction di-trans,octa-cis-undecaprenyl diphospho-N-acetyl-alpha-D-muramoyl-L-alanyl-D-glutamyl-meso-2,6-diaminopimeloyl-D-alanyl-D-alanine + UDP-N-acetyl-alpha-D-glucosamine = di-trans,octa-cis-undecaprenyl diphospho-[N-acetyl-alpha-D-glucosaminyl-(1-&gt;4)]-N-acetyl-alpha-D-muramoyl-L-alanyl-D-glutamyl-meso-2,6-diaminopimeloyl-D-alanyl-D-alanine + UDP + H(+). It participates in cell wall biogenesis; peptidoglycan biosynthesis. Its function is as follows. Cell wall formation. Catalyzes the transfer of a GlcNAc subunit on undecaprenyl-pyrophosphoryl-MurNAc-pentapeptide (lipid intermediate I) to form undecaprenyl-pyrophosphoryl-MurNAc-(pentapeptide)GlcNAc (lipid intermediate II). In Rhodospirillum rubrum (strain ATCC 11170 / ATH 1.1.1 / DSM 467 / LMG 4362 / NCIMB 8255 / S1), this protein is UDP-N-acetylglucosamine--N-acetylmuramyl-(pentapeptide) pyrophosphoryl-undecaprenol N-acetylglucosamine transferase.